The chain runs to 244 residues: Reticulon-like protein B7 (244 aa).

The Reticulon domain maps to 70-244; it reads PADVLLWRDK…EAKFLSKIPH (175 aa). A run of 3 helical transmembrane segments spans residues 80–100, 103–123, and 172–192; these read KVTLGLLSAVTVIWLLFGFGG, LLTSLCRGSILFLLLSFLWSN, and FVMAVIGLWLVSVIGNWFSFL.

It localises to the endoplasmic reticulum membrane. The chain is Reticulon-like protein B7 (RTNLB7) from Arabidopsis thaliana (Mouse-ear cress).